The primary structure comprises 274 residues: 2,3,4,5-tetrahydropyridine-2,6-dicarboxylate N-succinyltransferase (274 aa).

Positions 104 and 141 each coordinate substrate.

Belongs to the transferase hexapeptide repeat family. Homotrimer.

The protein resides in the cytoplasm. It carries out the reaction (S)-2,3,4,5-tetrahydrodipicolinate + succinyl-CoA + H2O = (S)-2-succinylamino-6-oxoheptanedioate + CoA. It functions in the pathway amino-acid biosynthesis; L-lysine biosynthesis via DAP pathway; LL-2,6-diaminopimelate from (S)-tetrahydrodipicolinate (succinylase route): step 1/3. This chain is 2,3,4,5-tetrahydropyridine-2,6-dicarboxylate N-succinyltransferase, found in Buchnera aphidicola subsp. Baizongia pistaciae (strain Bp).